The sequence spans 437 residues: Phosphomethylpyrimidine synthase (437 aa).

Substrate contacts are provided by residues Asn-69, Met-98, Tyr-127, His-163, 185-187 (SRG), 226-229 (DACR), and Glu-265. His-269 serves as a coordination point for Zn(2+). Tyr-292 contacts substrate. Residue His-333 participates in Zn(2+) binding. Positions 409, 412, and 416 each coordinate [4Fe-4S] cluster.

The protein belongs to the ThiC family. It depends on [4Fe-4S] cluster as a cofactor.

The catalysed reaction is 5-amino-1-(5-phospho-beta-D-ribosyl)imidazole + S-adenosyl-L-methionine = 4-amino-2-methyl-5-(phosphooxymethyl)pyrimidine + CO + 5'-deoxyadenosine + formate + L-methionine + 3 H(+). Its pathway is cofactor biosynthesis; thiamine diphosphate biosynthesis. Catalyzes the synthesis of the hydroxymethylpyrimidine phosphate (HMP-P) moiety of thiamine from aminoimidazole ribotide (AIR) in a radical S-adenosyl-L-methionine (SAM)-dependent reaction. This is Phosphomethylpyrimidine synthase from Clostridium botulinum (strain Kyoto / Type A2).